The primary structure comprises 206 residues: Small ribosomal subunit protein uS4 (206 aa).

The interval 18 to 44 (NIWGRPKSPVNRREYGPGQHGQRRKGK) is disordered. The S4 RNA-binding domain maps to 94–157 (RRLDAVVYRA…KQLAVVLEAV (64 aa)).

It belongs to the universal ribosomal protein uS4 family. As to quaternary structure, part of the 30S ribosomal subunit. Contacts protein S5. The interaction surface between S4 and S5 is involved in control of translational fidelity.

In terms of biological role, one of the primary rRNA binding proteins, it binds directly to 16S rRNA where it nucleates assembly of the body of the 30S subunit. Its function is as follows. With S5 and S12 plays an important role in translational accuracy. In Jannaschia sp. (strain CCS1), this protein is Small ribosomal subunit protein uS4.